The chain runs to 509 residues: Glutamate--tRNA ligase (509 aa).

Residues 20–30 carry the 'HIGH' region motif; that stretch reads PSPTGFPHVGT. Cysteine 117, cysteine 119, cysteine 144, and histidine 146 together coordinate Zn(2+). Positions 261-265 match the 'KMSKS' region motif; it reads KLSKR. Lysine 264 provides a ligand contact to ATP.

The protein belongs to the class-I aminoacyl-tRNA synthetase family. Glutamate--tRNA ligase type 1 subfamily. In terms of assembly, monomer. Zn(2+) serves as cofactor.

The protein localises to the cytoplasm. It catalyses the reaction tRNA(Glu) + L-glutamate + ATP = L-glutamyl-tRNA(Glu) + AMP + diphosphate. Its function is as follows. Catalyzes the attachment of glutamate to tRNA(Glu) in a two-step reaction: glutamate is first activated by ATP to form Glu-AMP and then transferred to the acceptor end of tRNA(Glu). This Psychrobacter cryohalolentis (strain ATCC BAA-1226 / DSM 17306 / VKM B-2378 / K5) protein is Glutamate--tRNA ligase.